The sequence spans 790 residues: F-box and leucine-rich repeat protein 13 (790 aa).

In terms of domain architecture, F-box spans Ala-237–Ile-283. LRR repeat units follow at residues Gln-503–Asp-525, Arg-531–Ser-552, Asn-557–Ser-579, Ser-582–Ser-602, Lys-606–Lys-628, and Leu-632–Thr-657.

It belongs to the DRC6 family. In terms of assembly, component of the nexin-dynein regulatory complex (N-DRC). Directly interacts with SKP1 and CUL1. Interacts with TCTE1/DRC5.

The protein resides in the cytoplasm. Its subcellular location is the cytoskeleton. The protein localises to the flagellum axoneme. It is found in the microtubule organizing center. It localises to the centrosome. Functionally, substrate-recognition component of the SCF (SKP1-CUL1-F-box protein)-type E3 ubiquitin ligase complex. Component of the nexin-dynein regulatory complex (N-DRC), a key regulator of ciliary/flagellar motility which maintains the alignment and integrity of the distal axoneme and regulates microtubule sliding in motile axonemes. Specifically targets CEP192 isoform 3 for ubiquitin-mediated proteolysis and thereby acts as a regulator of microtubule nucleation activity. The chain is F-box and leucine-rich repeat protein 13 (Fbxl13) from Mus musculus (Mouse).